The chain runs to 456 residues: Dual-specificity RNA methyltransferase RlmN (456 aa).

Positions 1-21 are disordered; that stretch reads MIQRHLGQPRLIQNGGDAGGV. Glu-175 serves as the catalytic Proton acceptor. A Radical SAM core domain is found at 183–416; it reads DEERGAVCIS…QDAGYSAPIR (234 aa). A disulfide bond links Cys-190 and Cys-427. Residues Cys-197, Cys-201, and Cys-204 each contribute to the [4Fe-4S] cluster site. S-adenosyl-L-methionine is bound by residues 253-254, Ser-285, 307-309, and Asn-384; these read GE and SLH. Cys-427 (S-methylcysteine intermediate) is an active-site residue.

This sequence belongs to the radical SAM superfamily. RlmN family. It depends on [4Fe-4S] cluster as a cofactor.

It is found in the cytoplasm. The enzyme catalyses adenosine(2503) in 23S rRNA + 2 reduced [2Fe-2S]-[ferredoxin] + 2 S-adenosyl-L-methionine = 2-methyladenosine(2503) in 23S rRNA + 5'-deoxyadenosine + L-methionine + 2 oxidized [2Fe-2S]-[ferredoxin] + S-adenosyl-L-homocysteine. It catalyses the reaction adenosine(37) in tRNA + 2 reduced [2Fe-2S]-[ferredoxin] + 2 S-adenosyl-L-methionine = 2-methyladenosine(37) in tRNA + 5'-deoxyadenosine + L-methionine + 2 oxidized [2Fe-2S]-[ferredoxin] + S-adenosyl-L-homocysteine. Specifically methylates position 2 of adenine 2503 in 23S rRNA and position 2 of adenine 37 in tRNAs. m2A2503 modification seems to play a crucial role in the proofreading step occurring at the peptidyl transferase center and thus would serve to optimize ribosomal fidelity. This is Dual-specificity RNA methyltransferase RlmN from Paramagnetospirillum magneticum (strain ATCC 700264 / AMB-1) (Magnetospirillum magneticum).